Here is an 877-residue protein sequence, read N- to C-terminus: Telomere length regulation protein clk-2 (877 aa).

A compositionally biased stretch (polar residues) spans 488–501; that stretch reads NKDSAAITSKNNLR. A disordered region spans residues 488–509; it reads NKDSAAITSKNNLRLDSDDDED.

Belongs to the TEL2 family.

The protein resides in the nucleus. The protein localises to the chromosome. Its subcellular location is the telomere. In terms of biological role, DNA damage checkpoint protein required for DNA damage-induced cell cycle arrest and apoptosis, thereby playing a role in genome stability. Regulator of telomere length. This is Telomere length regulation protein clk-2 (clk-2) from Caenorhabditis elegans.